The following is a 342-amino-acid chain: Dof zinc finger protein DOF4.6 (342 aa).

The disordered stretch occupies residues N21–N54. The segment covering K25 to P36 has biased composition (pro residues). The span at G41–Q51 shows a compositional bias: basic and acidic residues. The segment at V53–R107 adopts a Dof-type zinc-finger fold. Zn(2+)-binding residues include C55, C58, C80, and C83. The tract at residues R94–H136 is disordered. Residues S110 to S122 show a composition bias toward low complexity. Residues T127–H136 are compositionally biased toward basic residues.

As to expression, accumulates in the stele.

The protein resides in the nucleus. In terms of biological role, transcription factor that binds specifically to a 5'-AA[AG]G-3' consensus core sequence. The protein is Dof zinc finger protein DOF4.6 of Arabidopsis thaliana (Mouse-ear cress).